A 226-amino-acid polypeptide reads, in one-letter code: Lysosomal-associated transmembrane protein 4B (226 aa).

4 consecutive transmembrane segments (helical) span residues 26 to 46 (ILLG…LLSA), 72 to 92 (MCIA…ATYG), 100 to 120 (WIIP…LVAI), and 153 to 173 (CLVL…GYLI). The segment at 205–221 (PPYDDATVNGAAKEPPP) is required for NEDD4 interaction.

The protein belongs to the LAPTM4/LAPTM5 transporter family. In terms of assembly, homooligomer; upon reaching the lysosomes. Interacts with MCOLN1. Interacts with NEDD4; may play a role in the lysosomal sorting of LAPTM4B; enhances HGS association with NEDD4; mediates inhibition of EGFR degradation. Interacts with PIP5K1C; promotes SNX5 association with LAPTM4B; kinase activity of PIP5K1C is required; interaction is regulated by phosphatidylinositol 4,5-bisphosphate generated by PIP5K1C. Interacts with HGS; promotes HGS ubiquitination. Interacts with SNX5. Interacts with SLC3A2 and SLC7A5; recruits SLC3A2 and SLC7A5 to lysosomes to promote leucine uptake into these organelles and is required for mTORC1 activation. Interacts with LRRC32; decreases TGFB1 production in regulatory T cells. Interacts with BECN1; competes with EGFR for LAPTM4B binding; regulates EGFR activity. Interacts with EGFR; positively correlates with EGFR activation. In terms of processing, undergoes proteolytic cleavage following delivery to the lysosomes. Post-translationally, ubiquitinated by NEDD4.

It is found in the endomembrane system. Its subcellular location is the late endosome membrane. It localises to the cell membrane. The protein resides in the cell projection. The protein localises to the lysosome membrane. It is found in the endosome membrane. Its subcellular location is the endosome. It localises to the multivesicular body membrane. The protein resides in the multivesicular body lumen. Its function is as follows. Required for optimal lysosomal function. Blocks EGF-stimulated EGFR intraluminal sorting and degradation. Conversely by binding with the phosphatidylinositol 4,5-bisphosphate, regulates its PIP5K1C interaction, inhibits HGS ubiquitination and relieves LAPTM4B inhibition of EGFR degradation. Recruits SLC3A2 and SLC7A5 (the Leu transporter) to the lysosome, promoting entry of leucine and other essential amino acid (EAA) into the lysosome, stimulating activation of proton-transporting vacuolar (V)-ATPase protein pump (V-ATPase) and hence mTORC1 activation. Plays a role as negative regulator of TGFB1 production in regulatory T cells. Binds ceramide and facilitates its exit from late endosome in order to control cell death pathways. The chain is Lysosomal-associated transmembrane protein 4B from Macaca fascicularis (Crab-eating macaque).